A 375-amino-acid polypeptide reads, in one-letter code: Succinyl-diaminopimelate desuccinylase (375 aa).

H66 contacts Zn(2+). D68 is a catalytic residue. D99 is a binding site for Zn(2+). The active-site Proton acceptor is the E133. Positions 134, 162, and 348 each coordinate Zn(2+).

Belongs to the peptidase M20A family. DapE subfamily. In terms of assembly, homodimer. It depends on Zn(2+) as a cofactor. The cofactor is Co(2+).

It carries out the reaction N-succinyl-(2S,6S)-2,6-diaminopimelate + H2O = (2S,6S)-2,6-diaminopimelate + succinate. It functions in the pathway amino-acid biosynthesis; L-lysine biosynthesis via DAP pathway; LL-2,6-diaminopimelate from (S)-tetrahydrodipicolinate (succinylase route): step 3/3. In terms of biological role, catalyzes the hydrolysis of N-succinyl-L,L-diaminopimelic acid (SDAP), forming succinate and LL-2,6-diaminopimelate (DAP), an intermediate involved in the bacterial biosynthesis of lysine and meso-diaminopimelic acid, an essential component of bacterial cell walls. In Alkalilimnicola ehrlichii (strain ATCC BAA-1101 / DSM 17681 / MLHE-1), this protein is Succinyl-diaminopimelate desuccinylase.